The sequence spans 25 residues: Zinc metalloproteinase-disintegrin-like daborhagin-M (25 aa).

The region spanning 14–25 (SYVELIITVDHS) is the Peptidase M12B domain. Glu17 is a Ca(2+) binding site.

The protein belongs to the venom metalloproteinase (M12B) family. P-III subfamily. P-IIIa sub-subfamily. Monomer. Zn(2+) is required as a cofactor. Post-translationally, N-glycosylated. In terms of processing, contains 16 disulfide bonds. In terms of tissue distribution, expressed by the venom gland.

The protein resides in the secreted. Inhibited by EDTA, EGTA and 1,10-phenanthroline. Addition of Mg(2+) or Ca(2+) increases the casein hydrolysis rate. Snake venom zinc metalloprotease that possesses high hemorrhagic activity (minimum hemorrhagic dose, MHD=0.86 ug) when subcutaneously injected into mice. Has potent fibrinogenolytic activity on alpha-chain of fibrinogen (FGA). Hydrolyzes model substrate (beta-chain of insulin) at Ala(14)-Leu(15) and Tyr(16)-Leu(17) followed by His(10)-Leu(11) and Phe(24)-Phe(25). This is Zinc metalloproteinase-disintegrin-like daborhagin-M from Daboia siamensis (Eastern Russel's viper).